The primary structure comprises 546 residues: MSQVQSPLTATNSGLAVNNNTMNSQMPNRSNVRLVNGTLPPSLHVSSNLNHNTGNSSASYSGSQSRDDSTIVGLHYKIGKKIGEGSFGVLFEGTNMINGLPVAIKFEPRKTEAPQLKDEYRTYKILAGTPGIPQEYYFGQEGLHNILVIDLLGPSLEDLFDWCGRRFSVKTVVQVAVQMITLIEDLHAHDLIYRDIKPDNFLIGRPGQPDANKVHLIDFGMAKQYRDPKTKQHIPYREKKSLSGTARYMSINTHLGREQSRRDDMEAMGHVFFYFLRGQLPWQGLKAPNNKQKYEKIGEKKRLTNVYDLAQGLPIQFGRYLEIVRNLSFEETPDYEGYRMLLLSVLDDLGETADGQYDWMKLNGGRGWDLSINKKPNLHGYGHPNPPNEKSKRHRSKNHQYSSPDHHHHYNQQQQQQQAQAQAQAQAQAKVQQQQLQQAQAQQQANRYQLQPDDSHYDEEREASKLDPTSYEAYQQQTQQKYAQQQQKQMQQKSKQFANTGANGQTNKYPYNAQPTANDEQNAKNAAQDRNSNKSSKGFFSKLGCC.

Composition is skewed to polar residues over residues 1–33 (MSQVQSPLTATNSGLAVNNNTMNSQMPNRSNVR) and 44–55 (HVSSNLNHNTGN). The tract at residues 1-67 (MSQVQSPLTA…ASYSGSQSRD (67 aa)) is disordered. An N-acetylserine modification is found at Ser-2. The Protein kinase domain maps to 76-360 (YKIGKKIGEG…ETADGQYDWM (285 aa)). ATP contacts are provided by residues 82–90 (IGEGSFGVL) and Lys-105. Asp-195 serves as the catalytic Proton acceptor. Disordered regions lie at residues 373 to 425 (NKKP…QAQA) and 443 to 546 (QQAN…LGCC). Positions 412–425 (QQQQQQQAQAQAQA) are enriched in low complexity. Positions 453–465 (DDSHYDEEREASK) are enriched in basic and acidic residues. At Ser-455 the chain carries Phosphoserine. Lys-465 is covalently cross-linked (Glycyl lysine isopeptide (Lys-Gly) (interchain with G-Cter in ubiquitin)). A compositionally biased stretch (low complexity) spans 475–496 (QQQTQQKYAQQQQKQMQQKSKQ). Over residues 497–530 (FANTGANGQTNKYPYNAQPTANDEQNAKNAAQDR) the composition is skewed to polar residues. The segment covering 533–546 (NKSSKGFFSKLGCC) has biased composition (low complexity). 2 S-palmitoyl cysteine lipidation sites follow: Cys-545 and Cys-546.

Belongs to the protein kinase superfamily. CK1 Ser/Thr protein kinase family. Casein kinase I subfamily. In terms of processing, palmitoylated by AKR1, which is required for proper plasma membrane localization of YCK2.

The protein resides in the cell membrane. It catalyses the reaction L-seryl-[protein] + ATP = O-phospho-L-seryl-[protein] + ADP + H(+). It carries out the reaction L-threonyl-[protein] + ATP = O-phospho-L-threonyl-[protein] + ADP + H(+). In terms of biological role, casein kinases are operationally defined by their preferential utilization of acidic proteins such as caseins as substrates. This is Casein kinase I homolog 2 (YCK2) from Saccharomyces cerevisiae (strain ATCC 204508 / S288c) (Baker's yeast).